The primary structure comprises 2223 residues: Protein Ycf2 (2223 aa).

Position 1576–1583 (1576–1583 (GSIGTGRS)) interacts with ATP.

Belongs to the Ycf2 family.

The protein localises to the plastid. It localises to the chloroplast stroma. Functionally, probable ATPase of unknown function. Its presence in a non-photosynthetic plant (Epifagus virginiana) and experiments in tobacco indicate that it has an essential function which is probably not related to photosynthesis. In Silene latifolia (White campion), this protein is Protein Ycf2.